Reading from the N-terminus, the 152-residue chain is Superoxide dismutase [Cu-Zn] 5 (152 aa).

Cu cation is bound by residues histidine 44, histidine 46, and histidine 61. An intrachain disulfide couples cysteine 55 to cysteine 144. Positions 61, 69, 78, and 81 each coordinate Zn(2+). Histidine 118 contacts Cu cation.

Belongs to the Cu-Zn superoxide dismutase family. Cu cation is required as a cofactor. It depends on Zn(2+) as a cofactor.

It carries out the reaction 2 superoxide + 2 H(+) = H2O2 + O2. Functionally, destroys radicals which are normally produced within the cells and which are toxic to biological systems. This chain is Superoxide dismutase [Cu-Zn] 5 (sodE), found in Dictyostelium discoideum (Social amoeba).